Consider the following 658-residue polypeptide: Glycogen debranching enzyme (658 aa).

The Nucleophile role is filled by Asp-336. Glu-371 (proton donor) is an active-site residue. The disordered stretch occupies residues 460–484 (ANGEENRDGSNNNHSNNHGKEGLGG).

It belongs to the glycosyl hydrolase 13 family.

The catalysed reaction is Hydrolysis of (1-&gt;6)-alpha-D-glucosidic linkages to branches with degrees of polymerization of three or four glucose residues in limit dextrin.. Its pathway is glycan degradation; glycogen degradation. Functionally, removes maltotriose and maltotetraose chains that are attached by 1,6-alpha-linkage to the limit dextrin main chain, generating a debranched limit dextrin. In Escherichia fergusonii (strain ATCC 35469 / DSM 13698 / CCUG 18766 / IAM 14443 / JCM 21226 / LMG 7866 / NBRC 102419 / NCTC 12128 / CDC 0568-73), this protein is Glycogen debranching enzyme.